A 5193-amino-acid polypeptide reads, in one-letter code: Usherin (5193 aa).

The signal sequence occupies residues 1–34 (MHYLALSPGFLCYTIKTLILAYLASVLVLAASQG). At 35 to 5033 (VFPRLENVGA…KSTEFYSELW (4999 aa)) the chain is on the extracellular side. Residues asparagine 230, asparagine 258, asparagine 274, asparagine 358, asparagine 415, asparagine 448, and asparagine 469 are each glycosylated (N-linked (GlcNAc...) asparagine). In terms of domain architecture, Laminin N-terminal spans 268-514 (QDFRLYNVSL…AVDEIIVSGR (247 aa)). Disulfide bonds link cysteine 515-cysteine 524, cysteine 517-cysteine 533, cysteine 535-cysteine 546, cysteine 549-cysteine 569, cysteine 572-cysteine 581, cysteine 574-cysteine 602, cysteine 605-cysteine 614, cysteine 617-cysteine 635, cysteine 638-cysteine 652, cysteine 640-cysteine 659, cysteine 661-cysteine 670, cysteine 673-cysteine 688, cysteine 691-cysteine 705, cysteine 693-cysteine 712, cysteine 714-cysteine 723, cysteine 726-cysteine 741, cysteine 744-cysteine 756, cysteine 746-cysteine 763, cysteine 765-cysteine 774, cysteine 777-cysteine 789, cysteine 792-cysteine 805, cysteine 794-cysteine 812, cysteine 814-cysteine 823, and cysteine 826-cysteine 846. 10 Laminin EGF-like domains span residues 515 to 571 (CQCH…NCKP), 572 to 637 (CQCH…ACKL), 638 to 690 (CDCN…GCRP), 691 to 743 (CNCN…GCEP), 744 to 791 (CQCN…ACEV), 792 to 848 (CDCS…NCEK), 853 to 896 (NGSL…GCQA), 897 to 947 (CDCD…GCLP), 948 to 998 (CLCH…RCRP), and 999 to 1049 (CHCH…GCSK). Asparagine 647 carries N-linked (GlcNAc...) asparagine glycosylation. Residues asparagine 836 and asparagine 853 are each glycosylated (N-linked (GlcNAc...) asparagine). 14 disulfides stabilise this stretch: cysteine 867–cysteine 876, cysteine 879–cysteine 894, cysteine 897–cysteine 910, cysteine 899–cysteine 917, cysteine 919–cysteine 928, cysteine 931–cysteine 945, cysteine 948–cysteine 960, cysteine 950–cysteine 967, cysteine 969–cysteine 979, cysteine 982–cysteine 996, cysteine 999–cysteine 1011, cysteine 1001–cysteine 1018, cysteine 1020–cysteine 1029, and cysteine 1032–cysteine 1047. Asparagine 885 carries an N-linked (GlcNAc...) asparagine glycan. The N-linked (GlcNAc...) asparagine glycan is linked to asparagine 941. Asparagine 1008 is a glycosylation site (N-linked (GlcNAc...) asparagine). 5 consecutive Fibronectin type-III domains span residues 1055-1143 (PPPR…TKPE), 1147-1241 (GHLN…APPQ), 1242-1357 (TQGP…SVPV), 1358-1462 (FMAP…AAPA), and 1463-1566 (QLRP…LQLK). Residues asparagine 1068, asparagine 1089, asparagine 1150, asparagine 1171, and asparagine 1222 are each glycosylated (N-linked (GlcNAc...) asparagine). N-linked (GlcNAc...) asparagine glycans are attached at residues asparagine 1382, asparagine 1473, and asparagine 1626. Laminin G-like domains are found at residues 1511 to 1700 (TKGT…WEGC) and 1705 to 1882 (EEGV…QDGC). Residues cysteine 1663 and cysteine 1700 are joined by a disulfide bond. Asparagine 1770 is a glycosylation site (N-linked (GlcNAc...) asparagine). Fibronectin type-III domains follow at residues 1847–1946 (EPGF…TAPQ), 1948–2045 (VPTP…TPQE), 2046–2132 (APQE…TAQL), 2133–2234 (PPEQ…IPEG), 2235–2321 (VPAP…APPE), 2322–2421 (GVVN…SVEM), 2422–2525 (PPGA…DKPG), 2526–2613 (PIDA…TLPG), 2617–2713 (GIPS…TRPC), 2717–2810 (GVQP…THPA), 2811–2914 (PPQE…TLAG), 2918–3009 (RGAT…MWEE), and 3013–3103 (GMLP…TPSD). An intrachain disulfide couples cysteine 1853 to cysteine 1882. Asparagine 1894 carries N-linked (GlcNAc...) asparagine glycosylation. The tract at residues 1931–1955 (VSSDWSRGRTLGTAPQSVPTPSRAQ) is disordered. Polar residues predominate over residues 1943 to 1955 (TAPQSVPTPSRAQ). Asparagine 1958, asparagine 2095, asparagine 2121, asparagine 2177, asparagine 2186, asparagine 2249, asparagine 2276, asparagine 2313, asparagine 2368, and asparagine 2404 each carry an N-linked (GlcNAc...) asparagine glycan. 5 N-linked (GlcNAc...) asparagine glycosylation sites follow: asparagine 2575, asparagine 2647, asparagine 2701, asparagine 2761, and asparagine 2779. N-linked (GlcNAc...) asparagine glycosylation is found at asparagine 2928, asparagine 2998, asparagine 3023, asparagine 3090, asparagine 3208, asparagine 3322, and asparagine 3411. Fibronectin type-III domains are found at residues 3395–3489 (CPAT…TRED), 3490–3580 (VPEG…TTQR), 3581–3671 (SPEN…TLQA), 3672–3766 (APQG…TPED), 3769–3857 (PPCN…TLEA), 3858–3955 (APVG…TLEA), 3956–4059 (PPRG…SAPS), 4060–4148 (GLMN…APPD), 4149–4256 (TQMA…APPD), 4257–4346 (GLSP…TPEV), 4347–4437 (PPSE…APPE), 4438–4522 (NMDP…TSPS), 4523–4625 (APSG…VPPL), 4628–4725 (PAPH…TGPA), 4726–4818 (PPEG…THPA), 4819–4921 (PPSG…TKKE), and 4922–5005 (MPQY…YDAA). Asparagine 3589, asparagine 3645, asparagine 3686, asparagine 3712, asparagine 3723, and asparagine 3772 each carry an N-linked (GlcNAc...) asparagine glycan. Asparagine 3976, asparagine 4063, asparagine 4194, asparagine 4218, asparagine 4304, asparagine 4340, asparagine 4365, and asparagine 4410 each carry an N-linked (GlcNAc...) asparagine glycan. Residues asparagine 4556, asparagine 4575, asparagine 4683, asparagine 4716, asparagine 4746, asparagine 4756, asparagine 4765, asparagine 4915, and asparagine 4934 are each glycosylated (N-linked (GlcNAc...) asparagine). A helical transmembrane segment spans residues 5034-5054 (FIMVMAVVGLILLAIFLSLIL). At 5055–5193 (QRKIHKEPCI…EHTAFTDTHL (139 aa)) the chain is on the cytoplasmic side. Positions 5191-5193 (THL) match the PDZ-binding motif.

In terms of assembly, interacts with collagen IV and fibronectin via its laminin EGF-like domains. Interaction with collagen may be required for stable integration into the basement membrane. Interacts with NINL. Interacts with USH1C. Component of USH2 complex, composed of ADGRV1, PDZD7, USH2A and WHRN. Interacts with ADGRV1/MASS1 (via N-terminal PDZ domain). Interacts (via the cytoplasmic region) with WHRN. Interacts (via the cytoplasmic region) with PDZD7. Interacts (via the cytoplasmic region) with VEZT and MYO7A (via MyTH4-FERM domains); the interaction associates VEZT with the USH2 complex at the stereocilia base. In terms of tissue distribution, present in the testis, epididymis, oviduct, spleen, submaxillary gland, and small and large intestines. Not detected in the brain, skin, lung, skeletal muscle, cardiac muscle, liver or kidney. Expressed in smooth muscle of the colon and the epididymis. Also present in select vascular basement membranes. In the cochlea, it is present in virtually every basement membrane. It is particularly high in the strial capillary basement membranes (SCBMs). In the retina, it is again expressed in all of the basement membranes. It is also very prevalent in the lens capsule and the Bruch's layer between the retinal pigment epithelium and the choroid layer, which is very rich in basement membranes. In neonates in it is widely expressed in the basement membranes of the cochlea. Present in the synaptic terminals of retinal photoreceptors (at protein level).

It is found in the cell projection. Its subcellular location is the stereocilium membrane. The protein resides in the photoreceptor inner segment. The protein localises to the secreted. Functionally, involved in hearing and vision as member of the USH2 complex. In the inner ear, required for the maintenance of hair bundle ankle formation, which connects growing stereocilia in developing cochlear hair cells. In retina photoreceptors, the USH2 complex is required for the maintenance of periciliary membrane complex that seems to play a role in regulating intracellular protein transport. This is Usherin (Ush2A) from Mus musculus (Mouse).